The chain runs to 279 residues: Tryptophan synthase alpha chain (279 aa).

Catalysis depends on proton acceptor residues glutamate 50 and aspartate 61.

This sequence belongs to the TrpA family. In terms of assembly, tetramer of two alpha and two beta chains.

It carries out the reaction (1S,2R)-1-C-(indol-3-yl)glycerol 3-phosphate + L-serine = D-glyceraldehyde 3-phosphate + L-tryptophan + H2O. Its pathway is amino-acid biosynthesis; L-tryptophan biosynthesis; L-tryptophan from chorismate: step 5/5. In terms of biological role, the alpha subunit is responsible for the aldol cleavage of indoleglycerol phosphate to indole and glyceraldehyde 3-phosphate. This Mesorhizobium japonicum (strain LMG 29417 / CECT 9101 / MAFF 303099) (Mesorhizobium loti (strain MAFF 303099)) protein is Tryptophan synthase alpha chain.